The following is a 212-amino-acid chain: Thymidylate kinase (212 aa).

Residues 16–21, R97, R182, and K192 each bind ATP; that span reads RAGKTT.

The protein belongs to the thymidylate kinase family. Mg(2+) is required as a cofactor.

The enzyme catalyses dTMP + ATP = dTDP + ADP. The protein operates within pyrimidine metabolism; dTTP biosynthesis. In terms of biological role, catalyzes the phosphorylation of thymidine monophosphate (dTMP) to thymidine diphosphate (dTDP), the immediate precursor for the DNA building block dTTP, with ATP as the preferred phosphoryl donor in the presence of Mg(2+). This is Thymidylate kinase (dtymk) from Danio rerio (Zebrafish).